Consider the following 334-residue polypeptide: NAC domain-containing protein 66 (334 aa).

The region spanning 11–175 (VPPGFRFHPT…GWVVCRVFKK (165 aa)) is the NAC domain. The DNA-binding element occupies 111 to 181 (IGMRKTLVFY…VFKKNNLCKN (71 aa)).

Mostly expressed in anthers. Also present in pollen, base of siliques and inflorescence stems.

It localises to the nucleus. In terms of biological role, transcription activator of genes involved in biosynthesis of secondary walls. Together with NST1, required for the secondary cell wall thickening of the anther endocethium, which is necessary for anther dehiscence. May also regulate the secondary cell wall lignification of other tissues such as tracheary elements. The sequence is that of NAC domain-containing protein 66 (NAC066) from Arabidopsis thaliana (Mouse-ear cress).